A 289-amino-acid chain; its full sequence is HTH-type transcriptional regulator CatR (289 aa).

Residues 1–57 (MELRHLRYFKVLAETLNFTRAAELLHIAQPPLSRQISQLEDQLGTLLVVRERPLRLT) enclose the HTH lysR-type domain. Positions 18-37 (FTRAAELLHIAQPPLSRQIS) form a DNA-binding region, H-T-H motif.

The protein belongs to the LysR transcriptional regulatory family.

The protein resides in the cytoplasm. Functionally, positive regulator of the catBC operon that degrades catechol to acetyl-CoA. CatR binds in trans to the catR-catBC promoter-control region in the presence or absence of inducer but only activates the catBC operon in the presence of the inducer, cis-cis-muconate. The polypeptide is HTH-type transcriptional regulator CatR (catR) (Pseudomonas putida (Arthrobacter siderocapsulatus)).